The chain runs to 152 residues: Transcriptional regulator MraZ (152 aa).

SpoVT-AbrB domains follow at residues 5 to 52 and 81 to 124; these read ATLV…PLPE and ASEC…DETT.

It belongs to the MraZ family. As to quaternary structure, forms oligomers.

Its subcellular location is the cytoplasm. The protein resides in the nucleoid. Negatively regulates its own expression and that of the subsequent genes in the proximal part of the division and cell wall (dcw) gene cluster. Acts by binding directly to DNA. May also regulate the expression of genes outside the dcw cluster. This Klebsiella pneumoniae subsp. pneumoniae (strain ATCC 700721 / MGH 78578) protein is Transcriptional regulator MraZ.